The sequence spans 207 residues: Adenylyl-sulfate kinase (207 aa).

An ATP-binding site is contributed by 34-41 (GLSGSGKS). The active-site Phosphoserine intermediate is the S108.

The protein belongs to the APS kinase family.

The enzyme catalyses adenosine 5'-phosphosulfate + ATP = 3'-phosphoadenylyl sulfate + ADP + H(+). Its pathway is sulfur metabolism; hydrogen sulfide biosynthesis; sulfite from sulfate: step 2/3. Its function is as follows. Catalyzes the synthesis of activated sulfate. The sequence is that of Adenylyl-sulfate kinase from Lactiplantibacillus plantarum (strain ATCC BAA-793 / NCIMB 8826 / WCFS1) (Lactobacillus plantarum).